A 347-amino-acid polypeptide reads, in one-letter code: Protein RecA (347 aa).

Position 66-73 (66-73 (GPESSGKT)) interacts with ATP.

Belongs to the RecA family.

It localises to the cytoplasm. Functionally, can catalyze the hydrolysis of ATP in the presence of single-stranded DNA, the ATP-dependent uptake of single-stranded DNA by duplex DNA, and the ATP-dependent hybridization of homologous single-stranded DNAs. It interacts with LexA causing its activation and leading to its autocatalytic cleavage. The sequence is that of Protein RecA from Burkholderia cepacia (Pseudomonas cepacia).